The chain runs to 78 residues: Probable cytochrome c oxidase subunit 6B (78 aa).

Residues 21–64 (TKHCWANYVDYYGCVKHYNGDNSKCQTFFNSMNSLCPAAWISEW) enclose the CHCH domain. Positions 24–34 (CWANYVDYYGC) match the Cx9C motif motif. Cystine bridges form between Cys24–Cys56 and Cys34–Cys45. The Cx10C motif signature appears at 45-56 (CQTFFNSMNSLC).

The protein belongs to the cytochrome c oxidase subunit 6B family. In terms of assembly, component of the cytochrome c oxidase (complex IV, CIV), a multisubunit enzyme composed of a catalytic core of 3 subunits and several supernumerary subunits. The complex exists as a monomer or a dimer and forms supercomplexes (SCs) in the inner mitochondrial membrane with ubiquinol-cytochrome c oxidoreductase (cytochrome b-c1 complex, complex III, CIII).

The protein localises to the mitochondrion inner membrane. It functions in the pathway energy metabolism; oxidative phosphorylation. Component of the cytochrome c oxidase, the last enzyme in the mitochondrial electron transport chain which drives oxidative phosphorylation. The respiratory chain contains 3 multisubunit complexes succinate dehydrogenase (complex II, CII), ubiquinol-cytochrome c oxidoreductase (cytochrome b-c1 complex, complex III, CIII) and cytochrome c oxidase (complex IV, CIV), that cooperate to transfer electrons derived from NADH and succinate to molecular oxygen, creating an electrochemical gradient over the inner membrane that drives transmembrane transport and the ATP synthase. Cytochrome c oxidase is the component of the respiratory chain that catalyzes the reduction of oxygen to water. Electrons originating from reduced cytochrome c in the intermembrane space (IMS) are transferred via the dinuclear copper A center (CU(A)) of subunit 2 and heme A of subunit 1 to the active site in subunit 1, a binuclear center (BNC) formed by heme A3 and copper B (CU(B)). The BNC reduces molecular oxygen to 2 water molecules using 4 electrons from cytochrome c in the IMS and 4 protons from the mitochondrial matrix. The polypeptide is Probable cytochrome c oxidase subunit 6B (Dictyostelium discoideum (Social amoeba)).